The primary structure comprises 122 residues: MIQMQTNLDVADNSGARRVMCIKVLGGSKRRYATVGDIIVVSVKEAIPRGKVKKGDVMKAVVVRVAKDIRRADGSVIRFDRNAAVLVNNQSEPVGTRIFGPVPRELRAKNHMKIISLAPEVL.

Belongs to the universal ribosomal protein uL14 family. Part of the 50S ribosomal subunit. Forms a cluster with proteins L3 and L19. In the 70S ribosome, L14 and L19 interact and together make contacts with the 16S rRNA in bridges B5 and B8.

Its function is as follows. Binds to 23S rRNA. Forms part of two intersubunit bridges in the 70S ribosome. The chain is Large ribosomal subunit protein uL14 from Afipia carboxidovorans (strain ATCC 49405 / DSM 1227 / KCTC 32145 / OM5) (Oligotropha carboxidovorans).